A 354-amino-acid polypeptide reads, in one-letter code: Elongation factor Ts (354 aa).

The segment at 81-84 is involved in Mg(2+) ion dislocation from EF-Tu; sequence TDFV.

Belongs to the EF-Ts family.

It localises to the cytoplasm. In terms of biological role, associates with the EF-Tu.GDP complex and induces the exchange of GDP to GTP. It remains bound to the aminoacyl-tRNA.EF-Tu.GTP complex up to the GTP hydrolysis stage on the ribosome. The chain is Elongation factor Ts from Campylobacter curvus (strain 525.92).